Reading from the N-terminus, the 193-residue chain is Large ribosomal subunit protein uL18 (193 aa).

It belongs to the universal ribosomal protein uL18 family. Part of the 50S ribosomal subunit. Contacts the 5S and 23S rRNAs.

Functionally, this is one of the proteins that bind and probably mediate the attachment of the 5S RNA into the large ribosomal subunit, where it forms part of the central protuberance. This is Large ribosomal subunit protein uL18 from Methanococcus vannielii (strain ATCC 35089 / DSM 1224 / JCM 13029 / OCM 148 / SB).